We begin with the raw amino-acid sequence, 301 residues long: tRNA-cytidine(32) 2-sulfurtransferase (301 aa).

The PP-loop motif signature appears at 55–60 (SGGKDS). [4Fe-4S] cluster-binding residues include Cys130, Cys133, and Cys221.

It belongs to the TtcA family. As to quaternary structure, homodimer. Requires Mg(2+) as cofactor. It depends on [4Fe-4S] cluster as a cofactor.

The protein resides in the cytoplasm. It carries out the reaction cytidine(32) in tRNA + S-sulfanyl-L-cysteinyl-[cysteine desulfurase] + AH2 + ATP = 2-thiocytidine(32) in tRNA + L-cysteinyl-[cysteine desulfurase] + A + AMP + diphosphate + H(+). Its pathway is tRNA modification. Its function is as follows. Catalyzes the ATP-dependent 2-thiolation of cytidine in position 32 of tRNA, to form 2-thiocytidine (s(2)C32). The sulfur atoms are provided by the cysteine/cysteine desulfurase (IscS) system. This is tRNA-cytidine(32) 2-sulfurtransferase from Acinetobacter baumannii (strain AB307-0294).